Reading from the N-terminus, the 257-residue chain is 3-deoxy-manno-octulosonate cytidylyltransferase (257 aa).

This sequence belongs to the KdsB family.

It localises to the cytoplasm. It catalyses the reaction 3-deoxy-alpha-D-manno-oct-2-ulosonate + CTP = CMP-3-deoxy-beta-D-manno-octulosonate + diphosphate. It participates in nucleotide-sugar biosynthesis; CMP-3-deoxy-D-manno-octulosonate biosynthesis; CMP-3-deoxy-D-manno-octulosonate from 3-deoxy-D-manno-octulosonate and CTP: step 1/1. The protein operates within bacterial outer membrane biogenesis; lipopolysaccharide biosynthesis. Functionally, activates KDO (a required 8-carbon sugar) for incorporation into bacterial lipopolysaccharide in Gram-negative bacteria. The protein is 3-deoxy-manno-octulosonate cytidylyltransferase of Methylobacillus flagellatus (strain ATCC 51484 / DSM 6875 / VKM B-1610 / KT).